A 449-amino-acid polypeptide reads, in one-letter code: Type 3 secretion system ATPase (449 aa).

Residue glycine 178–threonine 183 participates in ATP binding.

This sequence belongs to the ATPase alpha/beta chains family. T3SS ATPase subfamily. In terms of assembly, the core secretion machinery of the T3SS is composed of approximately 20 different proteins, including cytoplasmic components, a base, an export apparatus and a needle. This subunit is part of the cytosolic complex. Forms homododecamers. Comprises two hexameric rings that are probably stacked face-to-face by the association of their C-terminal domains. Also present as monomer and homohexamer in solution.

The protein localises to the cytoplasm. It carries out the reaction ATP + H2O + cellular proteinSide 1 = ADP + phosphate + cellular proteinSide 2.. With respect to regulation, oligomerization increases ATPase activity. ATPase component of the type III secretion system (T3SS), also called injectisome, which is used to inject bacterial effector proteins into eukaryotic host cells. Acts as a molecular motor to provide the energy that is required for the export of proteins. Required for type III secretion apparatus (T3SA) formation, proper protein secretion, host cell invasion and virulence. May play a critical role in T3SS substrate recognition, disassembly of the effector/chaperone complex and unfolding of the effector in an ATP-dependent manner prior to secretion. The sequence is that of Type 3 secretion system ATPase from Pseudomonas savastanoi pv. phaseolicola (Pseudomonas syringae pv. phaseolicola).